Reading from the N-terminus, the 701-residue chain is Polyribonucleotide nucleotidyltransferase (701 aa).

Residues aspartate 487 and aspartate 493 each coordinate Mg(2+). Residues 554-613 (PTMIAMKIDTDKIRDVIGKGGATIRAICEETKASIDIEDDGSIKIFGETKEAADAAKQRI) form the KH domain. The S1 motif domain maps to 623–691 (GKIYVGKVER…NRGRIKLSIK (69 aa)).

The protein belongs to the polyribonucleotide nucleotidyltransferase family. As to quaternary structure, component of the RNA degradosome, which is a multiprotein complex involved in RNA processing and mRNA degradation. The cofactor is Mg(2+).

The protein localises to the cytoplasm. The enzyme catalyses RNA(n+1) + phosphate = RNA(n) + a ribonucleoside 5'-diphosphate. In terms of biological role, involved in mRNA degradation. Catalyzes the phosphorolysis of single-stranded polyribonucleotides processively in the 3'- to 5'-direction. The sequence is that of Polyribonucleotide nucleotidyltransferase from Pseudomonas entomophila (strain L48).